Consider the following 340-residue polypeptide: GPALPP motifs-containing protein 1 (340 aa).

The disordered stretch occupies residues 1–304; sequence MARDLIGPAL…PQERIPFDRD (304 aa). At A2 the chain carries N-acetylalanine. The GPALPP motif 1 signature appears at 7 to 12; that stretch reads GPALPP. Phosphoserine is present on S28. Residues 32 to 37 carry the GPALPP motif 2 motif; sequence GPALPP. The segment covering 60–69 has biased composition (acidic residues); the sequence is GNQESEEDDS. The GPALPP motif 3 motif lies at 92–97; the sequence is GPALPP. S105 is subject to Phosphoserine. A compositionally biased stretch (pro residues) spans 107 to 116; it reads PRPIIGPALP. Positions 112–117 match the GPALPP motif 4 motif; the sequence is GPALPP. A compositionally biased stretch (basic and acidic residues) spans 124–133; it reads QKSDKGRDDP. A Phosphothreonine modification is found at T138. Phosphoserine is present on residues S140 and S141. Composition is skewed to basic and acidic residues over residues 163 to 187, 227 to 261, 269 to 279, and 287 to 304; these read EFEK…KPIV, PADR…KRLA, ESKRSESLMDI, and KAAE…FDRD. K271 is covalently cross-linked (Glycyl lysine isopeptide (Lys-Gly) (interchain with G-Cter in SUMO2)). Residue K308 forms a Glycyl lysine isopeptide (Lys-Gly) (interchain with G-Cter in SUMO2) linkage.

This Homo sapiens (Human) protein is GPALPP motifs-containing protein 1 (GPALPP1).